Reading from the N-terminus, the 258-residue chain is Imidazole glycerol phosphate synthase subunit HisF (258 aa).

Active-site residues include D11 and D130.

The protein belongs to the HisA/HisF family. In terms of assembly, heterodimer of HisH and HisF.

The protein localises to the cytoplasm. It catalyses the reaction 5-[(5-phospho-1-deoxy-D-ribulos-1-ylimino)methylamino]-1-(5-phospho-beta-D-ribosyl)imidazole-4-carboxamide + L-glutamine = D-erythro-1-(imidazol-4-yl)glycerol 3-phosphate + 5-amino-1-(5-phospho-beta-D-ribosyl)imidazole-4-carboxamide + L-glutamate + H(+). It participates in amino-acid biosynthesis; L-histidine biosynthesis; L-histidine from 5-phospho-alpha-D-ribose 1-diphosphate: step 5/9. Its function is as follows. IGPS catalyzes the conversion of PRFAR and glutamine to IGP, AICAR and glutamate. The HisF subunit catalyzes the cyclization activity that produces IGP and AICAR from PRFAR using the ammonia provided by the HisH subunit. The sequence is that of Imidazole glycerol phosphate synthase subunit HisF from Xanthomonas axonopodis pv. citri (strain 306).